The sequence spans 362 residues: Methylthioribose-1-phosphate isomerase (362 aa).

Asp-252 (proton donor) is an active-site residue.

Belongs to the eIF-2B alpha/beta/delta subunits family. MtnA subfamily.

It is found in the cytoplasm. The protein resides in the nucleus. It catalyses the reaction 5-(methylsulfanyl)-alpha-D-ribose 1-phosphate = 5-(methylsulfanyl)-D-ribulose 1-phosphate. Its pathway is amino-acid biosynthesis; L-methionine biosynthesis via salvage pathway; L-methionine from S-methyl-5-thio-alpha-D-ribose 1-phosphate: step 1/6. Functionally, catalyzes the interconversion of methylthioribose-1-phosphate (MTR-1-P) into methylthioribulose-1-phosphate (MTRu-1-P). The polypeptide is Methylthioribose-1-phosphate isomerase (Drosophila pseudoobscura pseudoobscura (Fruit fly)).